The chain runs to 821 residues: Centrosomal protein of 95 kDa (821 aa).

Disordered stretches follow at residues 310-354 (TLCK…FPQK), 390-474 (ATGE…DTHH), and 514-550 (KEAF…SSKA). Composition is skewed to basic and acidic residues over residues 325-340 (ESSK…RSEN) and 390-410 (ATGE…HSAN). Basic residues predominate over residues 427–441 (RKPRPGFSMHRKAPY). Phosphoserine occurs at positions 445, 447, and 449. 2 coiled-coil regions span residues 578–627 (LTKM…VKKE) and 695–789 (LQIQ…DDDA).

It is found in the cytoplasm. The protein resides in the cytoskeleton. It localises to the microtubule organizing center. Its subcellular location is the centrosome. The protein localises to the spindle pole. This Rattus norvegicus (Rat) protein is Centrosomal protein of 95 kDa (Cep95).